Reading from the N-terminus, the 327-residue chain is Glutamyl endopeptidase (327 aa).

An N-terminal signal peptide occupies residues 1–29 (MKGKFLKVSSLFVATLTTATLVSSPAANA). Residues 30 to 68 (LSSKAMDNHPQQSQSSKQQTPKIQKGGNLKPLEQREHAN) constitute a propeptide that is removed on maturation. Residues 33-61 (KAMDNHPQQSQSSKQQTPKIQKGGNLKPL) form a disordered region. A compositionally biased stretch (low complexity) spans 40–54 (QQSQSSKQQTPKIQK). Residues histidine 119, aspartate 161, and serine 237 each act as charge relay system in the active site. Residues 283–327 (FANDDQPNNPDNPDNPNNPDNPNNPNNPDNPDNGDNNNSDNPDAA) form a disordered region. Residues 286–327 (DDQPNNPDNPDNPNNPDNPNNPNNPDNPDNGDNNNSDNPDAA) are compositionally biased toward low complexity. 9 consecutive repeat copies span residues 289-291 (PNN), 292-294 (PDN), 295-297 (PDN), 298-300 (PNN), 301-303 (PDN), 304-306 (PNN), 307-309 (PNN), 310-312 (PDN), and 313-315 (PDN). The interval 289–315 (PNNPDNPDNPNNPDNPNNPNNPDNPDN) is 9 X 3 AA repeats of P-[DN]-N.

This sequence belongs to the peptidase S1B family. In terms of processing, proteolytically cleaved by aureolysin (aur). This cleavage leads to the activation of SspA.

The protein localises to the secreted. The catalysed reaction is Preferential cleavage: Glu-|-Xaa, Asp-|-Xaa.. In terms of biological role, preferentially cleaves peptide bonds on the carboxyl-terminal side of aspartate and glutamate. Along with other extracellular proteases it is involved in colonization and infection of human tissues. Required for proteolytic maturation of thiol protease SspB and inactivation of SspC, an inhibitor of SspB. It is the most important protease for degradation of fibronectin-binding protein (FnBP) and surface protein A, which are involved in adherence to host cells. May also protect bacteria against host defense mechanism by cleaving the immunoglobulin classes IgG, IgA and IgM. May be involved in the stability of secreted lipases. The sequence is that of Glutamyl endopeptidase (sspA) from Staphylococcus aureus (strain MW2).